We begin with the raw amino-acid sequence, 400 residues long: Eukaryotic translation initiation factor 3 subunit M (400 aa).

Positions 180 to 354 (LIAKIYSALV…QSFAVHRAQK (175 aa)) constitute a PCI domain.

This sequence belongs to the eIF-3 subunit M family. As to quaternary structure, component of the eukaryotic translation initiation factor 3 (eIF-3) complex.

The protein resides in the cytoplasm. In terms of biological role, component of the eukaryotic translation initiation factor 3 (eIF-3) complex, which is involved in protein synthesis of a specialized repertoire of mRNAs and, together with other initiation factors, stimulates binding of mRNA and methionyl-tRNAi to the 40S ribosome. The eIF-3 complex specifically targets and initiates translation of a subset of mRNAs involved in cell proliferation. This is Eukaryotic translation initiation factor 3 subunit M from Yarrowia lipolytica (strain CLIB 122 / E 150) (Yeast).